A 361-amino-acid polypeptide reads, in one-letter code: Feruloyl CoA ortho-hydroxylase 1 (361 aa).

Residues 204–312 (TKESLFMGSI…RISVPIFVNP (109 aa)) form the Fe2OG dioxygenase domain. Residue Tyr220 participates in 2-oxoglutarate binding. Fe cation is bound by residues His235, Asp237, and His293. 2 residues coordinate 2-oxoglutarate: Arg303 and Ser305.

Belongs to the iron/ascorbate-dependent oxidoreductase family. L-ascorbate is required as a cofactor. It depends on Fe(2+) as a cofactor. As to expression, highly expressed in roots, especially in the cortex.

The catalysed reaction is (E)-feruloyl-CoA + 2-oxoglutarate + O2 = (E)-6-hydroxyferuloyl-CoA + succinate + CO2. It carries out the reaction (E)-6-hydroxyferuloyl-CoA = scopoletin + CoA. Its pathway is phenylpropanoid metabolism. In terms of biological role, 2-oxoglutarate (OG)- and Fe(II)-dependent dioxygenase (2OGD) involved in scopoletin biosynthesis. Converts feruloyl CoA into 6'-hydroxyferuloyl CoA but has no activity with ferulic acid, feruloylquinic acid, caffeic acid, caffeoyl CoA, p-coumaric acid, cinnamic acid, cinnamoyl CoA or benzoyl CoA. Required for the production and secretion of compounds (e.g. fluorescent coumarins) that facilitate the mobilization and uptake of iron from sources with low bioavailability or in high pH-induced iron deficiency conditions. Involved in the pathway of sideretin biosynthesis from feruloyl CoA, a redox-active catecholic metabolite exuded by roots in response to iron deficiency in order to facilitate the uptake of iron; this pathway consists in the successive conversion from feruloyl CoA to scopoletin, from scopoletin to fraxetin and from fraxetin to sideretin. Catalyzes the biosynthesis of scopoletin from feruloyl CoA. This is Feruloyl CoA ortho-hydroxylase 1 from Arabidopsis thaliana (Mouse-ear cress).